Consider the following 732-residue polypeptide: Nephrocystin-1 (732 aa).

Residues 3–105 adopt a coiled-coil conformation; sequence ARRQRDPLQA…LQGLAVTISR (103 aa). At Y46 the chain carries Phosphotyrosine; by FAK2. 2 disordered regions span residues 103–153 and 205–244; these read ISRE…KWST and TYLE…KQRT. Acidic residues-rich tracts occupy residues 115–145 and 210–236; these read TEEE…EKEE and YSEE…ETAD. A phosphoserine; by CK2 mark is found at S121, S123, and S126. Residues 127-150 are a coiled coil; sequence EDSGGEEEDAEEEEEEKEENESHK. Residues 152 to 212 enclose the SH3 domain; it reads STGEEYIAVG…PRTYLEPYSE (61 aa). The residue at position 349 (Y349) is a Phosphotyrosine; by FAK2. The residue at position 721 (Y721) is a Phosphotyrosine; by SRC.

This sequence belongs to the nephrocystin-1 family. As to quaternary structure, interacts with BCAR1, PTK2B/PYK2 and tensin. Interacts with INVS and NPHP3. Interacts with PACS1; the interaction is dependent on NPHP1 phosphorylation by CK2. Interacts with KIF7. Interacts with AHI1 and TNK2. Interacts with NPHP4 in a complex containing NPHP1, NPHP4 and RPGRIP1L. Interacts with IQCB1; the interaction likely requires additional interactors. Interacts with ANKS3. Interacts with SPATA7. Interacts with FLNA. Phosphorylation by CK2 is required for the interaction with PACS1 and the targeting to the base region of cilia. Widespread expression, with highest levels in pituitary gland, spinal cord, thyroid gland, testis, skeletal muscle, lymph node and trachea. Weakly expressed in heart, kidney and pancreas. Expressed in nasal epithelial cells (at protein level). Expressed in the renal collecting duct (at protein level).

It localises to the cell junction. It is found in the adherens junction. The protein localises to the cell projection. Its subcellular location is the cilium. The protein resides in the cytoplasm. It localises to the cytoskeleton. It is found in the cilium axoneme. The protein localises to the tight junction. Together with BCAR1 it may play a role in the control of epithelial cell polarity. Involved in the organization of apical junctions in kidney cells together with NPHP4 and RPGRIP1L/NPHP8. Does not seem to be strictly required for ciliogenesis. Seems to help to recruit PTK2B/PYK2 to cell matrix adhesions, thereby initiating phosphorylation of PTK2B/PYK2 and PTK2B/PYK2-dependent signaling. May play a role in the regulation of intraflagellar transport (IFT) during cilia assembly. Required for normal retina development. In connecting photoreceptor cilia influences the movement of some IFT proteins such as IFT88 and WDR19. Involved in spermatogenesis. The protein is Nephrocystin-1 (NPHP1) of Homo sapiens (Human).